Reading from the N-terminus, the 367-residue chain is UDP-N-acetylglucosamine--N-acetylmuramyl-(pentapeptide) pyrophosphoryl-undecaprenol N-acetylglucosamine transferase (367 aa).

UDP-N-acetyl-alpha-D-glucosamine contacts are provided by residues 21–23 (TGG), N129, R170, S198, and Q295.

The protein belongs to the glycosyltransferase 28 family. MurG subfamily.

It is found in the cell inner membrane. It catalyses the reaction di-trans,octa-cis-undecaprenyl diphospho-N-acetyl-alpha-D-muramoyl-L-alanyl-D-glutamyl-meso-2,6-diaminopimeloyl-D-alanyl-D-alanine + UDP-N-acetyl-alpha-D-glucosamine = di-trans,octa-cis-undecaprenyl diphospho-[N-acetyl-alpha-D-glucosaminyl-(1-&gt;4)]-N-acetyl-alpha-D-muramoyl-L-alanyl-D-glutamyl-meso-2,6-diaminopimeloyl-D-alanyl-D-alanine + UDP + H(+). The protein operates within cell wall biogenesis; peptidoglycan biosynthesis. Functionally, cell wall formation. Catalyzes the transfer of a GlcNAc subunit on undecaprenyl-pyrophosphoryl-MurNAc-pentapeptide (lipid intermediate I) to form undecaprenyl-pyrophosphoryl-MurNAc-(pentapeptide)GlcNAc (lipid intermediate II). The polypeptide is UDP-N-acetylglucosamine--N-acetylmuramyl-(pentapeptide) pyrophosphoryl-undecaprenol N-acetylglucosamine transferase (Synechococcus sp. (strain JA-2-3B'a(2-13)) (Cyanobacteria bacterium Yellowstone B-Prime)).